The following is a 582-amino-acid chain: TBCC domain-containing protein 1 (582 aa).

Residues 140 to 153 (EWPSPRSRSPSSSS) show a composition bias toward low complexity. The interval 140–159 (EWPSPRSRSPSSSSSERDAK) is disordered. The C-CAP/cofactor C-like domain maps to 305-451 (PPGSRLVLMS…LWNQPLLFGV (147 aa)). The segment covering 547–558 (SLLPPTITPSSS) has biased composition (low complexity). Residues 547–582 (SLLPPTITPSSSAEHWSSNQNTLKEQTHEQPTGTVC) form a disordered region. Over residues 559-582 (AEHWSSNQNTLKEQTHEQPTGTVC) the composition is skewed to polar residues.

It belongs to the TBCC family.

It localises to the cytoplasm. The protein localises to the cytoskeleton. It is found in the microtubule organizing center. Its subcellular location is the centrosome. The protein resides in the spindle pole. May play a role in the regulation of centrosome and Golgi apparatus positioning. The protein is TBCC domain-containing protein 1 (tbccd1) of Danio rerio (Zebrafish).